A 411-amino-acid polypeptide reads, in one-letter code: Arginine deiminase (411 aa).

The active-site Amidino-cysteine intermediate is the Cys401.

Belongs to the arginine deiminase family.

The protein resides in the cytoplasm. The catalysed reaction is L-arginine + H2O = L-citrulline + NH4(+). It participates in amino-acid degradation; L-arginine degradation via ADI pathway; carbamoyl phosphate from L-arginine: step 1/2. The chain is Arginine deiminase from Staphylococcus aureus (strain MRSA252).